A 279-amino-acid polypeptide reads, in one-letter code: Ribose-phosphate pyrophosphokinase (279 aa).

ATP contacts are provided by residues 31 to 33 (DGE) and 88 to 89 (RQ). Mg(2+) is bound by residues histidine 121 and aspartate 159. Lysine 182 is a catalytic residue. D-ribose 5-phosphate contacts are provided by residues arginine 184, aspartate 208, and 212–216 (STGGT).

The protein belongs to the ribose-phosphate pyrophosphokinase family. Class III (archaeal) subfamily. The cofactor is Mg(2+).

It is found in the cytoplasm. It carries out the reaction D-ribose 5-phosphate + ATP = 5-phospho-alpha-D-ribose 1-diphosphate + AMP + H(+). It participates in metabolic intermediate biosynthesis; 5-phospho-alpha-D-ribose 1-diphosphate biosynthesis; 5-phospho-alpha-D-ribose 1-diphosphate from D-ribose 5-phosphate (route I): step 1/1. In terms of biological role, involved in the biosynthesis of the central metabolite phospho-alpha-D-ribosyl-1-pyrophosphate (PRPP) via the transfer of pyrophosphoryl group from ATP to 1-hydroxyl of ribose-5-phosphate (Rib-5-P). This Pyrococcus furiosus (strain ATCC 43587 / DSM 3638 / JCM 8422 / Vc1) protein is Ribose-phosphate pyrophosphokinase.